The primary structure comprises 94 residues: Co-chaperonin GroES (94 aa).

This sequence belongs to the GroES chaperonin family. As to quaternary structure, heptamer of 7 subunits arranged in a ring. Interacts with the chaperonin GroEL.

It is found in the cytoplasm. In terms of biological role, together with the chaperonin GroEL, plays an essential role in assisting protein folding. The GroEL-GroES system forms a nano-cage that allows encapsulation of the non-native substrate proteins and provides a physical environment optimized to promote and accelerate protein folding. GroES binds to the apical surface of the GroEL ring, thereby capping the opening of the GroEL channel. The chain is Co-chaperonin GroES from Lactiplantibacillus plantarum (strain ATCC BAA-793 / NCIMB 8826 / WCFS1) (Lactobacillus plantarum).